The chain runs to 474 residues: 3-isopropylmalate dehydratase large subunit (474 aa).

Residues Cys353, Cys414, and Cys417 each coordinate [4Fe-4S] cluster.

It belongs to the aconitase/IPM isomerase family. LeuC type 1 subfamily. Heterodimer of LeuC and LeuD. The cofactor is [4Fe-4S] cluster.

It carries out the reaction (2R,3S)-3-isopropylmalate = (2S)-2-isopropylmalate. It functions in the pathway amino-acid biosynthesis; L-leucine biosynthesis; L-leucine from 3-methyl-2-oxobutanoate: step 2/4. Catalyzes the isomerization between 2-isopropylmalate and 3-isopropylmalate, via the formation of 2-isopropylmaleate. This is 3-isopropylmalate dehydratase large subunit from Pseudomonas aeruginosa (strain LESB58).